The following is a 256-amino-acid chain: Triosephosphate isomerase (256 aa).

9–11 (NWK) contacts substrate. His96 serves as the catalytic Electrophile. The active-site Proton acceptor is Glu168. Residues Ser213 and 234–235 (GG) each bind substrate.

This sequence belongs to the triosephosphate isomerase family. In terms of assembly, homodimer.

The protein resides in the cytoplasm. The enzyme catalyses D-glyceraldehyde 3-phosphate = dihydroxyacetone phosphate. It functions in the pathway carbohydrate biosynthesis; gluconeogenesis. The protein operates within carbohydrate degradation; glycolysis; D-glyceraldehyde 3-phosphate from glycerone phosphate: step 1/1. Involved in the gluconeogenesis. Catalyzes stereospecifically the conversion of dihydroxyacetone phosphate (DHAP) to D-glyceraldehyde-3-phosphate (G3P). This is Triosephosphate isomerase from Baumannia cicadellinicola subsp. Homalodisca coagulata.